We begin with the raw amino-acid sequence, 462 residues long: uncharacterized protein (462 aa).

The disordered stretch occupies residues 1–108 (MEDSNTNKDI…NGQDDQDEMD (108 aa)). Over residues 36 to 51 (TVERILERKQKERESK) the composition is skewed to basic and acidic residues. Over residues 64–95 (SSPSSLLSSPISSNDNNNNNNNNNNESFDINN) the composition is skewed to low complexity. Positions 119–150 (LLKRKAALAAKKKESLAEQMKKYNQQYDSIIS) form a coiled coil. Residues 188-208 (SKLQSLNNNTSPSTSSSNLID) are disordered. Positions 190–208 (LQSLNNNTSPSTSSSNLID) are enriched in low complexity.

This is an uncharacterized protein from Dictyostelium discoideum (Social amoeba).